The primary structure comprises 400 residues: Forkhead box protein Q1 (400 aa).

Residues 1 to 112 (MKLEVFVPRA…EGARSKPYTR (112 aa)) are disordered. Positions 32-54 (LSAAGDDSLGSDGDCAANSPAAG) are enriched in low complexity. Gly residues-rich tracts occupy residues 55 to 66 (SGAGDLEGGGGE) and 95 to 104 (CAGGVGGGEG). The segment at residues 115–210 (KPPYSYIALI…ADGVFRRRRK (96 aa)) is a DNA-binding region (fork-head). The interval 213-264 (SHRTTVSASGLRPEEAPPGPAGTPQPAPAARSSPIARSPARQEERSSPASKF) is disordered. Over residues 228–239 (APPGPAGTPQPA) the composition is skewed to pro residues. Positions 240 to 251 (PAARSSPIARSP) are enriched in low complexity.

In terms of tissue distribution, expressed in kidney and stomach. Expression in the outer medulla of the kidney and the transitional epithelium. Expressed in the hair follicle medulla.

It localises to the nucleus. Its function is as follows. Plays a role in hair follicle differentiation. The polypeptide is Forkhead box protein Q1 (Foxq1) (Mus musculus (Mouse)).